A 334-amino-acid polypeptide reads, in one-letter code: Aspartate carbamoyltransferase catalytic subunit (334 aa).

Carbamoyl phosphate-binding residues include R70 and T71. L-aspartate is bound at residue K98. R120, H150, and Q153 together coordinate carbamoyl phosphate. Residues R183 and R238 each coordinate L-aspartate. G279 and P280 together coordinate carbamoyl phosphate.

This sequence belongs to the aspartate/ornithine carbamoyltransferase superfamily. ATCase family. In terms of assembly, heterododecamer (2C3:3R2) of six catalytic PyrB chains organized as two trimers (C3), and six regulatory PyrI chains organized as three dimers (R2).

It catalyses the reaction carbamoyl phosphate + L-aspartate = N-carbamoyl-L-aspartate + phosphate + H(+). It functions in the pathway pyrimidine metabolism; UMP biosynthesis via de novo pathway; (S)-dihydroorotate from bicarbonate: step 2/3. Catalyzes the condensation of carbamoyl phosphate and aspartate to form carbamoyl aspartate and inorganic phosphate, the committed step in the de novo pyrimidine nucleotide biosynthesis pathway. This chain is Aspartate carbamoyltransferase catalytic subunit, found in Marinomonas sp. (strain MWYL1).